The chain runs to 62 residues: Large ribosomal subunit protein uL29 (62 aa).

Belongs to the universal ribosomal protein uL29 family.

The protein is Large ribosomal subunit protein uL29 of Geobacter sulfurreducens (strain ATCC 51573 / DSM 12127 / PCA).